The following is a 370-amino-acid chain: tRNA-specific 2-thiouridylase MnmA (370 aa).

ATP contacts are provided by residues 12–19 and Met-38; that span reads GLSGGVDS. An interaction with target base in tRNA region spans residues 98 to 100; the sequence is NPD. The active-site Nucleophile is the Cys-103. A disulfide bond links Cys-103 and Cys-201. Gly-127 lines the ATP pocket. Residues 151 to 153 form an interaction with tRNA region; it reads KDQ. Cys-201 (cysteine persulfide intermediate) is an active-site residue. The interaction with tRNA stretch occupies residues 319 to 320; that stretch reads RY.

The protein belongs to the MnmA/TRMU family.

It localises to the cytoplasm. The enzyme catalyses S-sulfanyl-L-cysteinyl-[protein] + uridine(34) in tRNA + AH2 + ATP = 2-thiouridine(34) in tRNA + L-cysteinyl-[protein] + A + AMP + diphosphate + H(+). Its function is as follows. Catalyzes the 2-thiolation of uridine at the wobble position (U34) of tRNA, leading to the formation of s(2)U34. This is tRNA-specific 2-thiouridylase MnmA from Verminephrobacter eiseniae (strain EF01-2).